The following is a 341-amino-acid chain: Major histocompatibility complex class I-related protein 1 (341 aa).

An N-terminal signal peptide occupies residues 1–22 (MGELMAFLLPLIIVLMVKHSDS). Positions 23–109 (RTHSLRYFRL…KRLQRHYNHS (87 aa)) are alpha-1. Residues 23-201 (RTHSLRYFRL…EYGKDTLQRT (179 aa)) form an antigen-binding cleft region. Residues 23 to 302 (RTHSLRYFRL…QESETIPLVM (280 aa)) are Extracellular-facing. 3 residues coordinate 5-(2-oxoethylideneamino)-6-(D-ribitylamino)uracil: Arg-31, Ser-46, and Lys-65. The 5-(2-oxopropylideneamino)-6-(D-ribitylamino)uracil site is built by Arg-31, Ser-46, and Lys-65. The 7-hydroxy-6-methyl-8-(1-D-ribityl)lumazine site is built by Arg-31, Ser-46, and Lys-65. Arg-31 serves as a coordination point for 8-(9H-purin-6-yl)-2-oxa-8-azabicyclo[3.3.1]nona-3,6-diene-4,6-dicarbaldehyde. The 8-(9H-purin-6-yl)-2-oxa-8-azabicyclo[3.3.1]nona-3,6-diene-4,6-dicarbaldehyde site is built by Lys-65 and His-80. Lys-65 contacts 2-amino-4-oxopteridine-6-carbaldehyde. Pyridoxal is bound at residue Lys-65. N-linked (GlcNAc...) asparagine glycosylation occurs at Asn-107. Positions 110-201 (GSHTYQRMIG…EYGKDTLQRT (92 aa)) are alpha-2. 5-(2-oxoethylideneamino)-6-(D-ribitylamino)uracil contacts are provided by Arg-116, Tyr-174, and Gln-175. 5-(2-oxopropylideneamino)-6-(D-ribitylamino)uracil is bound by residues Arg-116, Tyr-174, and Gln-175. 7-hydroxy-6-methyl-8-(1-D-ribityl)lumazine is bound by residues Arg-116, Tyr-174, and Gln-175. Residue Arg-116 participates in 8-(9H-purin-6-yl)-2-oxa-8-azabicyclo[3.3.1]nona-3,6-diene-4,6-dicarbaldehyde binding. Disulfide bonds link Cys-120–Cys-183 and Cys-222–Cys-278. Residues 202-293 (EPPLVRVNRK…GVHMVLQVPQ (92 aa)) form an alpha-3 region. In terms of domain architecture, Ig-like C1-type spans 203–299 (PPLVRVNRKE…QVPQESETIP (97 aa)). The interval 294 to 302 (ESETIPLVM) is connecting peptide. A helical membrane pass occupies residues 303 to 323 (KAVSGSIVLVIVLAGVGVLVW). Topologically, residues 324–341 (RRRPREQNGAIYLPTPDR) are cytoplasmic.

The protein belongs to the MHC class I family. In terms of assembly, heterotrimer that consists of MR1, B2M and a metabolite antigen. Major classes of metabolite ligands presented by MR1 include riboflavin-related antigens, pyrimidines and ribityl lumazines, nucleobase adducts and folate derivatives. Forms reversible covalent Schiff base complexes with microbial pyrimidine-based metabolite, which serves as a molecular switch triggering complete folding, stable association with B2M and translocation of the ternary complex from endoplasmic reticulum to the plasma membrane. Alternatively, forms non-Schiff base complexes with ribityl lumazines. On antigen-presenting cells, the ternary complex interacts with TCR on MR1-restricted T cells, predominantly represented by CD8-positive and CD4- and CD8-double negative MAIT cell subsets. Interacts with TAPBP and TAPBPL chaperones in the endoplasmic reticulum. TAPBP associated or not with MHC class I peptide loading complex binds ligand-free MR1 or MR1-B2M complex, providing for stable MR1 pools ready for metabolite antigen processing. TAPBPL interacts with MR1 in a ligand-independent way; this interaction may stabilize MR1 pool and facilitate ligand loading and dissociation. MR1-B2M heterodimer adopts a topology similar to classical MHC class I molecules, with alpha-1 and alpha-2 domains of MR1 forming the antigen-binding cleft composed of two alpha-helices resting on a floor of 7-stranded anti-parallel beta-pleated sheet. The ribityl moiety of pyrimidine-based antigens is recognized by Tyr-95 residue in the CDR3 alpha loop of the invariant TRAV1-2 TCR. Homodimerizes and does not associate with B2M. N-glycosylated. In terms of tissue distribution, ubiquitous. Low expression is detected in peripheral blood B cells, T cells, monocytes and in bronchial epithelial cells (at protein level). Expressed in plasmablasts or plasma B cells in the lamina propria of ileum, appendix and colon (at protein level). Highly expressed on a subset of CD45-positive CD3-positive thymocytes (at protein level).

The protein resides in the cell membrane. It is found in the endoplasmic reticulum membrane. It localises to the golgi apparatus membrane. The protein localises to the early endosome membrane. Its subcellular location is the late endosome membrane. The protein resides in the secreted. Its activity is regulated as follows. Inhibited by pterin-based metabolites such as 6-formylpterin (6-FP, a product of folic acid photodegradation). 6-FP competitively inhibits MAIT cell activation by 5-OP-RU. Modulated by commonly prescribed anti-inflammatory drug metabolites. Inhibited by salicilates such as 3-formylsalicylic and 5-formylsalicylic acids. Activated by diclofenac and/or its hydroxy metabolites. Functionally, antigen-presenting molecule specialized in displaying microbial pyrimidine-based metabolites to alpha-beta T cell receptors (TCR) on innate-type mucosal-associated invariant T (MAIT) cells. In complex with B2M preferentially presents riboflavin-derived metabolites to semi-invariant TRAV1.2 TCRs on MAIT cells, guiding immune surveillance of the microbial metabolome at mucosal epithelial barriers. Signature pyrimidine-based microbial antigens are generated via non-enzymatic condensation of metabolite intermediates of the riboflavin pathway with by-products arising from other metabolic pathways such as glycolysis. Typical potent antigenic metabolites are 5-(2-oxoethylideneamino)-6-D-ribitylaminouracil (5-OE-RU) and 5-(2-oxopropylideneamino)-6-D-ribitylaminouracil (5-OP-RU), products of condensation of 5-amino-6-D-ribityaminouracil (5-A-RU) with glyoxal or methylglyoxal by-products, respectively. May present microbial antigens to various TRAV1-2-negative MAIT cell subsets, providing for unique recognition of diverse microbes, including pathogens that do not synthesize riboflavin. Upon antigen recognition, elicits rapid innate-type MAIT cell activation to eliminate pathogenic microbes by directly killing infected cells. During T cell development, drives thymic selection and post-thymic terminal differentiation of MAIT cells in a process dependent on commensal microflora. Acts as an immune sensor of cancer cell metabolome. May present a tumor-specific or -associated metabolite essential for cancer cell survival to a 'pan-cancer' TCR consisting of TRAV38.2-DV8*TRAJ31 alpha chain paired with a TRBV25.1*TRBJ2.3 beta chain on a non-MAIT CD8-positive T cell clone (MC.7.G5), triggering T cell-mediated killing of a wide range of cancer cell types. Its function is as follows. Allele MR1*01: Presents microbial-derived metabolite 5-OP-RU to semi-invariant TRAV1.2-TRAJ33-TRBV6.1 (A-F7) TCR on MAIT cells. Presents nucleobase carbonyl adducts generated during oxidative stress. Captures M3Ade, a nucleobase adduct composed of one adenine modified by a malondialdehyde trimer, for recognition by MR1-restricted T cell clones expressing a polyclonal TCR repertoire. Displays moderate binding affinity toward tumor-enriched pyridoxal and pyridoxal 5'-phosphate antigens. In terms of biological role, allele MR1*04: Presents tumor-enriched metabolite pyridoxal to pan-cancer 7.G5 TCR on T cells enabling preferential recognition of cancer cells. May act as an alloantigen. The chain is Major histocompatibility complex class I-related protein 1 from Homo sapiens (Human).